Reading from the N-terminus, the 127-residue chain is Group 3 truncated hemoglobin ctb (127 aa).

Heme is bound by residues tyrosine 64 and histidine 72.

The protein belongs to the truncated hemoglobin family. Group III subfamily. In terms of assembly, monomer. The cofactor is heme.

It is found in the cytoplasm. Has been suggested to be involved in cytochrome c peroxidase or P450-like oxygen chemistry or cyanide detoxification. The high oxygen affinity of this protein suggests that it probably does not function as an oxygen transporter. The chain is Group 3 truncated hemoglobin ctb (ctb) from Campylobacter jejuni subsp. jejuni serotype O:2 (strain ATCC 700819 / NCTC 11168).